The sequence spans 143 residues: Transcriptional regulator MraZ (143 aa).

SpoVT-AbrB domains are found at residues 5 to 47 and 76 to 119; these read EYDH…TLDE and AVEV…DRET.

This sequence belongs to the MraZ family. Forms oligomers.

Its subcellular location is the cytoplasm. It is found in the nucleoid. In Staphylococcus aureus (strain Mu3 / ATCC 700698), this protein is Transcriptional regulator MraZ.